The sequence spans 105 residues: uncharacterized protein (105 aa).

The segment at 58-105 is disordered; it reads YRKKKPNHSRDNPRINSNLSTNYAQAKSVERSRSNSLNSGPNPLENAT. 2 stretches are compositionally biased toward polar residues: residues 71–82 and 91–105; these read RINSNLSTNYAQ and SNSL…ENAT.

The protein resides in the mitochondrion. This is an uncharacterized protein from Arabidopsis thaliana (Mouse-ear cress).